Consider the following 161-residue polypeptide: Cytochrome c-type biogenesis protein CcmE (161 aa).

Residues 1-8 (MNPRRKKR) are Cytoplasmic-facing. Residues 9-29 (LTLAVALIAGVAAVASLLLYA) traverse the membrane as a helical; Signal-anchor for type II membrane protein segment. Residues 30–161 (LNSNLNLFYT…TYNQKALEDK (132 aa)) are Periplasmic-facing. Heme is bound by residues H131 and Y135. Residues 142 to 161 (EAMGQTHEKPTYNQKALEDK) form a disordered region. The span at 147–161 (THEKPTYNQKALEDK) shows a compositional bias: basic and acidic residues.

It belongs to the CcmE/CycJ family.

The protein resides in the cell inner membrane. Heme chaperone required for the biogenesis of c-type cytochromes. Transiently binds heme delivered by CcmC and transfers the heme to apo-cytochromes in a process facilitated by CcmF and CcmH. In Shewanella frigidimarina (strain NCIMB 400), this protein is Cytochrome c-type biogenesis protein CcmE.